A 347-amino-acid polypeptide reads, in one-letter code: Protein-glutamate methylesterase/protein-glutamine glutaminase 3 (347 aa).

Residues 3 to 120 form the Response regulatory domain; sequence QVFIVDDSAV…KNFLEESEIL (118 aa). Aspartate 54 carries the 4-aspartylphosphate modification. One can recognise a CheB-type methylesterase domain in the interval 159–347; that stretch reads IDTTDKLIAI…SKIVGEVQYF (189 aa). Active-site residues include serine 171, histidine 197, and aspartate 293.

It belongs to the CheB family. In terms of processing, phosphorylated by CheA. Phosphorylation of the N-terminal regulatory domain activates the methylesterase activity.

It localises to the cytoplasm. It catalyses the reaction [protein]-L-glutamate 5-O-methyl ester + H2O = L-glutamyl-[protein] + methanol + H(+). It carries out the reaction L-glutaminyl-[protein] + H2O = L-glutamyl-[protein] + NH4(+). Its function is as follows. Involved in chemotaxis. Part of a chemotaxis signal transduction system that modulates chemotaxis in response to various stimuli. Catalyzes the demethylation of specific methylglutamate residues introduced into the chemoreceptors (methyl-accepting chemotaxis proteins or MCP) by CheR. Also mediates the irreversible deamidation of specific glutamine residues to glutamic acid. The chain is Protein-glutamate methylesterase/protein-glutamine glutaminase 3 from Leptospira interrogans serogroup Icterohaemorrhagiae serovar copenhageni (strain Fiocruz L1-130).